The sequence spans 484 residues: uncharacterized protein (484 aa).

The next 12 helical transmembrane spans lie at 19 to 39, 78 to 98, 111 to 131, 134 to 154, 165 to 185, 199 to 219, 249 to 269, 289 to 309, 321 to 341, 360 to 380, 398 to 418, and 440 to 460; these read LSFG…MIFV, VNWG…WLIV, FFML…FIIL, IFAI…SNYL, FSPF…AGII, IVFL…IILG, TWYW…PFTF, ISVF…TIGL, ISTI…VFVL, LFLF…GVML, FGLI…ITSL, and LGAY…LALL.

It is found in the cell membrane. This is an uncharacterized protein from Mesomycoplasma hyopneumoniae (strain 232) (Mycoplasma hyopneumoniae).